Consider the following 351-residue polypeptide: Signal recognition particle receptor FtsY (351 aa).

GTP contacts are provided by residues Gly-156 to Thr-163, Asp-238 to Arg-242, and Thr-302 to Asp-305.

Belongs to the GTP-binding SRP family. FtsY subfamily. Part of the signal recognition particle protein translocation system, which is composed of SRP and FtsY. SRP is a ribonucleoprotein composed of Ffh and a 4.5S RNA molecule.

The protein localises to the cell membrane. It localises to the cytoplasm. It carries out the reaction GTP + H2O = GDP + phosphate + H(+). Functionally, involved in targeting and insertion of nascent membrane proteins into the cytoplasmic membrane. Acts as a receptor for the complex formed by the signal recognition particle (SRP) and the ribosome-nascent chain (RNC). Interaction with SRP-RNC leads to the transfer of the RNC complex to the Sec translocase for insertion into the membrane, the hydrolysis of GTP by both Ffh and FtsY, and the dissociation of the SRP-FtsY complex into the individual components. This Buchnera aphidicola subsp. Schizaphis graminum (strain Sg) protein is Signal recognition particle receptor FtsY.